Reading from the N-terminus, the 71-residue chain is Protein PSY2 (71 aa).

The signal sequence occupies residues 1-20 (MSFGTRLLLFLILTLPLVTS). Residues 21 to 46 (SSPNTLHVSGIVKTGTTSRFLMMTIE) constitute a propeptide that is removed on maturation. At Tyr-48 the chain carries Sulfotyrosine. The disordered stretch occupies residues 50 to 71 (DPSANTRHDPSVPTNAKADTTP). A compositionally biased stretch (polar residues) spans 61–71 (VPTNAKADTTP). Pro-62 is modified (4-hydroxyproline). The O-linked (Ara...) hydroxyproline glycan is linked to Pro-62. Residues 65–71 (AKADTTP) constitute a propeptide that is removed on maturation.

It belongs to the sulfated-peptide plant hormone family. The sulfation and the glycosylation are required for full activity.

It localises to the secreted. Its function is as follows. Promotes cellular proliferation and expansion. The sequence is that of Protein PSY2 (PSY2) from Arabidopsis thaliana (Mouse-ear cress).